The following is a 2291-amino-acid chain: Protein Ycf2 (2291 aa).

An ATP-binding site is contributed by 1645–1652 (GSIGTGRS).

The protein belongs to the Ycf2 family.

Its subcellular location is the plastid. The protein localises to the chloroplast stroma. Its function is as follows. Probable ATPase of unknown function. Its presence in a non-photosynthetic plant (Epifagus virginiana) and experiments in tobacco indicate that it has an essential function which is probably not related to photosynthesis. In Olimarabidopsis pumila (Dwarf rocket), this protein is Protein Ycf2.